Here is an 89-residue protein sequence, read N- to C-terminus: Small ribosomal subunit protein uS15 (89 aa).

It belongs to the universal ribosomal protein uS15 family. As to quaternary structure, part of the 30S ribosomal subunit. Forms a bridge to the 50S subunit in the 70S ribosome, contacting the 23S rRNA.

Functionally, one of the primary rRNA binding proteins, it binds directly to 16S rRNA where it helps nucleate assembly of the platform of the 30S subunit by binding and bridging several RNA helices of the 16S rRNA. Its function is as follows. Forms an intersubunit bridge (bridge B4) with the 23S rRNA of the 50S subunit in the ribosome. The sequence is that of Small ribosomal subunit protein uS15 from Tolumonas auensis (strain DSM 9187 / NBRC 110442 / TA 4).